We begin with the raw amino-acid sequence, 124 residues long: S-adenosylmethionine decarboxylase proenzyme (124 aa).

The Schiff-base intermediate with substrate; via pyruvic acid role is filled by S63. S63 carries the post-translational modification Pyruvic acid (Ser); by autocatalysis. H68 functions as the Proton acceptor; for processing activity in the catalytic mechanism. The active-site Proton donor; for catalytic activity is the C83.

It belongs to the prokaryotic AdoMetDC family. Type 1 subfamily. In terms of assembly, heterotetramer of two alpha and two beta chains arranged as a dimer of alpha/beta heterodimers. Pyruvate serves as cofactor. Post-translationally, is synthesized initially as an inactive proenzyme. Formation of the active enzyme involves a self-maturation process in which the active site pyruvoyl group is generated from an internal serine residue via an autocatalytic post-translational modification. Two non-identical subunits are generated from the proenzyme in this reaction, and the pyruvate is formed at the N-terminus of the alpha chain, which is derived from the carboxyl end of the proenzyme. The post-translation cleavage follows an unusual pathway, termed non-hydrolytic serinolysis, in which the side chain hydroxyl group of the serine supplies its oxygen atom to form the C-terminus of the beta chain, while the remainder of the serine residue undergoes an oxidative deamination to produce ammonia and the pyruvoyl group blocking the N-terminus of the alpha chain.

It catalyses the reaction S-adenosyl-L-methionine + H(+) = S-adenosyl 3-(methylsulfanyl)propylamine + CO2. It functions in the pathway amine and polyamine biosynthesis; S-adenosylmethioninamine biosynthesis; S-adenosylmethioninamine from S-adenosyl-L-methionine: step 1/1. Its function is as follows. Catalyzes the decarboxylation of S-adenosylmethionine to S-adenosylmethioninamine (dcAdoMet), the propylamine donor required for the synthesis of the polyamines spermine and spermidine from the diamine putrescine. The chain is S-adenosylmethionine decarboxylase proenzyme from Caldicellulosiruptor bescii (strain ATCC BAA-1888 / DSM 6725 / KCTC 15123 / Z-1320) (Anaerocellum thermophilum).